Here is a 189-residue protein sequence, read N- to C-terminus: HGPRTase-like protein 1 (189 aa).

Belongs to the purine/pyrimidine phosphoribosyltransferase family. Archaeal HPRT subfamily.

Functionally, may catalyze a purine salvage reaction, the substrate is unknown. This is HGPRTase-like protein 1 from Natrialba magadii (strain ATCC 43099 / DSM 3394 / CCM 3739 / CIP 104546 / IAM 13178 / JCM 8861 / NBRC 102185 / NCIMB 2190 / MS3) (Natronobacterium magadii).